The sequence spans 292 residues: ATP synthase gamma chain (292 aa).

This sequence belongs to the ATPase gamma chain family. In terms of assembly, F-type ATPases have 2 components, CF(1) - the catalytic core - and CF(0) - the membrane proton channel. CF(1) has five subunits: alpha(3), beta(3), gamma(1), delta(1), epsilon(1). CF(0) has three main subunits: a, b and c.

The protein localises to the cell inner membrane. Produces ATP from ADP in the presence of a proton gradient across the membrane. The gamma chain is believed to be important in regulating ATPase activity and the flow of protons through the CF(0) complex. This chain is ATP synthase gamma chain, found in Brucella ovis (strain ATCC 25840 / 63/290 / NCTC 10512).